We begin with the raw amino-acid sequence, 157 residues long: Class I hydrophobin rodA (157 aa).

The first 41 residues, 1 to 41 (MKFSIAAAVVAFAASVAALPPAHDSQFAGNGVGNKGNSNVK), serve as a signal peptide directing secretion. N-linked (GlcNAc...) asparagine glycosylation occurs at N47. Cystine bridges form between C57/C131, C65/C125, C66/C106, and C132/C150.

It belongs to the fungal hydrophobin family. As to quaternary structure, self-assembles to form functional amyloid fibrils called rodlets. Self-assembly into fibrillar rodlets occurs spontaneously at hydrophobic:hydrophilic interfaces and the rodlets further associate laterally to form amphipathic monolayers.

The protein localises to the secreted. It is found in the spore wall. Its function is as follows. Aerial growth, conidiation, and dispersal of filamentous fungi in the environment rely upon a capability of their secreting small amphipathic proteins called hydrophobins (HPBs) with low sequence identity. Class I can self-assemble into an outermost layer of rodlet bundles on aerial cell surfaces, conferring cellular hydrophobicity that supports fungal growth, development and dispersal; whereas Class II form highly ordered films at water-air interfaces through intermolecular interactions but contribute nothing to the rodlet structure. RodA is a class I hydrophobin that contributes to surface hydrophobicity, which is important for processes such as association of hyphae in reproductive structures, dispersal of aerial spores and adhesion of pathogens to host structures. Important for the formation of hydrophobic rodlet layers of asexually-produced spores. Promotes also biofilm formation and may enhance lignocellulose utilization via promoting a compact substrate-enzyme-fungus structure. The polypeptide is Class I hydrophobin rodA (Emericella nidulans (strain FGSC A4 / ATCC 38163 / CBS 112.46 / NRRL 194 / M139) (Aspergillus nidulans)).